Consider the following 1193-residue polypeptide: K(+) efflux antiporter 1, chloroplastic (1193 aa).

The N-terminal 49 residues, 1–49, are a transit peptide targeting the chloroplast; that stretch reads MEYASTFQRPILFHGGDGASYCFPNRLISPKGISITSGDSKVHSCFRLR. Residues 50–585 are Stromal-facing; sequence RNVAQSGTLN…MIPHQEVNEE (536 aa). Residues 103–135 form a disordered region; the sequence is SLGNADSNDHRIGESSESSDETEATDLKDARVE. Residues 131 to 355 adopt a coiled-coil conformation; the sequence is DARVENDTDS…RAEKSLSISQ (225 aa). The residue at position 168 (Lys168) is an N6-acetyllysine; by NSI. Polar residues predominate over residues 351 to 364; it reads LSISQTPEETQGQL. 2 disordered regions span residues 351-372 and 421-474; these read LSIS…TSQE and QPYE…NSPK. The span at 439–465 shows a compositional bias: basic and acidic residues; sequence KVVEADSEKPKINVQTKKQETQKDLPK. The helical transmembrane segment at 586 to 606 threads the bilayer; sequence EASLFDFLWLLLASVIFVPLF. Over 607 to 612 the chain is Chloroplast intermembrane; that stretch reads QKIPGG. Residues 613 to 633 form a helical membrane-spanning segment; the sequence is SPVLGYLAAGILIGPYGLSII. Over 634 to 640 the chain is Stromal; that stretch reads RNVHGTR. A helical membrane pass occupies residues 641–661; the sequence is AIAEFGVVFLLFNIGLELSVE. The Chloroplast intermembrane portion of the chain corresponds to 662-668; the sequence is RLSSMKK. Residues 669 to 689 traverse the membrane as a helical segment; sequence YVFGLGSAQVLVTAAVVGLLA. Over 690–698 the chain is Stromal; that stretch reads HYVAGQAGP. Residues 699–719 form a helical membrane-spanning segment; the sequence is AAIVIGNGLALSSTAVVLQVL. The Chloroplast intermembrane segment spans residues 720 to 733; that stretch reads QERGESTSRHGRAS. Residues 734–754 traverse the membrane as a helical segment; the sequence is FSVLLFQDLAVVVLLILIPLI. The Stromal portion of the chain corresponds to 755 to 766; that stretch reads SPNSSKGGIGFQ. A helical transmembrane segment spans residues 767-787; that stretch reads AIAEALGLAAVKAAVAITAII. The Chloroplast intermembrane portion of the chain corresponds to 788–827; sequence AGGRLLLRPIYKQIAENRNAEIFSANTLLVILGTSLLTAR. The chain crosses the membrane as a helical span at residues 828–848; it reads AGLSMALGAFLAGLLLAETEF. At 849-860 the chain is on the stromal side; the sequence is SLQVESDIAPYR. A helical membrane pass occupies residues 861–881; sequence GLLLGLFFMTVGMSIDPKLLL. Residues 882-883 lie on the Chloroplast intermembrane side of the membrane; sequence SN. The chain crosses the membrane as a helical span at residues 884–904; that stretch reads FPVIVGTLGLLIVGKTMLVVI. Topologically, residues 905–912 are stromal; it reads MGKLFGIS. Residues 913–933 traverse the membrane as a helical segment; the sequence is IISAIRVGLLLAPGGEFAFVA. At 934–948 the chain is on the chloroplast intermembrane side; sequence FGEAVNQGIMSPQLS. Residues 949-969 form a helical membrane-spanning segment; it reads SLLFLVVGISMAITPWLAAGG. Residues 970–1193 lie on the Stromal side of the membrane; sequence QLIASRFELH…QIIEGGTVVI (224 aa). In terms of domain architecture, RCK N-terminal spans 995–1112; sequence QGHIIICGFG…EKAGATAVVP (118 aa). The interval 1165–1184 is disordered; the sequence is GYSRTSKPKPQPSDASGDNQ.

Belongs to the monovalent cation:proton antiporter 2 (CPA2) transporter (TC 2.A.37) family. KEA (TC 2.A.37.1) subfamily. Post-translationally, acetylated at Lys-168 by the stromal acetyltransferase enzyme NSI. Expressed in shoots and roots. Mainly localized to leaf veins, hypocotyls, mesophylls and guard cells. Accumulates at high levels in small and dividing plastids (at protein level).

The protein localises to the plastid. Its subcellular location is the chloroplast inner membrane. It carries out the reaction K(+)(in) + H(+)(out) = K(+)(out) + H(+)(in). Its activity is regulated as follows. Repressed by sodium ions Na(+). Electroneutral K(+)/H(+) efflux antiporter involved in chloroplastic K(+) homeostasis and osmotic adjustment, especially during plastid division and thylakoid membrane formation. Collaboratively with KEA2, adjusts alkaline stromal pH upon light to dark transitions in plastids. Together with KEA2, critical for chloroplast development, including chloroplast RNA-metabolism (e.g. rRNA maturation, polysome loading and RNA-protein interactions) and plastid gene expression (PGE), ion homeostasis, and photosynthesis. Contributes, during early seedling development, to the regulation of photosynthesis and abscisic acid- (ABA-) mediated primary root growth in a sucrose-dependent manner. Involved in the regulation of reactive oxygen and nitrogen species (ROS and RNS) metabolism. Required in roots for rapid hyperosmotic-induced Ca(2+) responses and for osmo-sensory potentiation in hyperosmotic conditions. May counteract resilience to drought and salt stress, involving photorespiratory pathway and stomata closure. In Arabidopsis thaliana (Mouse-ear cress), this protein is K(+) efflux antiporter 1, chloroplastic.